A 297-amino-acid chain; its full sequence is Thiosulfate sulfurtransferase (297 aa).

Lysine 14 is subject to N6-acetyllysine; alternate. Lysine 14 carries the post-translational modification N6-succinyllysine; alternate. One can recognise a Rhodanese 1 domain in the interval leucine 25–serine 143. Serine 35 carries O-linked (GlcNAc) serine glycosylation. A Phosphoserine modification is found at serine 38. An N6-acetyllysine; alternate modification is found at lysine 136. Position 136 is an N6-succinyllysine; alternate (lysine 136). The interval glutamate 144–arginine 159 is hinge. Lysine 163 bears the N6-acetyllysine mark. The 116-residue stretch at glutamine 173–arginine 288 folds into the Rhodanese 2 domain. Position 175 is an N6-acetyllysine; alternate (lysine 175). Lysine 175 carries the N6-succinyllysine; alternate modification. Arginine 187 serves as a coordination point for substrate. Lysine 224 carries the post-translational modification N6-acetyllysine; alternate. Position 224 is an N6-succinyllysine; alternate (lysine 224). Lysine 236 carries the N6-acetyllysine modification. Lysine 237 is modified (N6-acetyllysine; alternate). Lysine 237 bears the N6-succinyllysine; alternate mark. Cysteine 248 functions as the Cysteine persulfide intermediate in the catalytic mechanism. Substrate is bound at residue lysine 250.

In terms of assembly, monomer.

The protein localises to the mitochondrion matrix. The enzyme catalyses thiosulfate + hydrogen cyanide = thiocyanate + sulfite + 2 H(+). Together with MRPL18, acts as a mitochondrial import factor for the cytosolic 5S rRNA. Only the nascent unfolded cytoplasmic form is able to bind to the 5S rRNA. Formation of iron-sulfur complexes and cyanide detoxification. Binds molecular oxygen and sulfur. The chain is Thiosulfate sulfurtransferase (TST) from Cricetulus griseus (Chinese hamster).